Here is a 279-residue protein sequence, read N- to C-terminus: DegV domain-containing protein SA1258 (279 aa).

The DegV domain maps to 4–278 (QIIVTDSTSD…QGAIGLVVLK (275 aa)). Hexadecanoate-binding residues include threonine 61 and serine 93.

May bind long-chain fatty acids, such as palmitate, and may play a role in lipid transport or fatty acid metabolism. In Staphylococcus aureus (strain N315), this protein is DegV domain-containing protein SA1258.